The primary structure comprises 460 residues: Armadillo repeat-containing protein LFR (460 aa).

Residues 1-30 (MQKRELGKSGGNSGGSSGPPAKRGRPFGST) form a disordered region. Positions 8–17 (KSGGNSGGSS) are enriched in gly residues. 3 ARM repeats span residues 227-269 (DNEV…NLAH), 323-362 (NEPF…NLVE), and 366-407 (DCRL…NLVS).

Interacts with AS2. As to expression, expressed in roots, leaves, stems and flowers.

The protein resides in the nucleus. Functionally, involved in leaf and flower development. Plays roles in leaf development partly by associating with AS2 and repressing KNAT1/BP transcription. Required for the formation of anther cell layers and normal expression of genes that regulates anther development. This is Armadillo repeat-containing protein LFR from Arabidopsis thaliana (Mouse-ear cress).